Consider the following 123-residue polypeptide: Small ribosomal subunit protein uS12 (123 aa).

Position 89 is a 3-methylthioaspartic acid (aspartate 89). Residues 104-123 (SVGVKDRKKSRSKYGAKRPK) form a disordered region. The segment covering 109-123 (DRKKSRSKYGAKRPK) has biased composition (basic residues).

It belongs to the universal ribosomal protein uS12 family. As to quaternary structure, part of the 30S ribosomal subunit. Contacts proteins S8 and S17. May interact with IF1 in the 30S initiation complex.

In terms of biological role, with S4 and S5 plays an important role in translational accuracy. Interacts with and stabilizes bases of the 16S rRNA that are involved in tRNA selection in the A site and with the mRNA backbone. Located at the interface of the 30S and 50S subunits, it traverses the body of the 30S subunit contacting proteins on the other side and probably holding the rRNA structure together. The combined cluster of proteins S8, S12 and S17 appears to hold together the shoulder and platform of the 30S subunit. This Geotalea daltonii (strain DSM 22248 / JCM 15807 / FRC-32) (Geobacter daltonii) protein is Small ribosomal subunit protein uS12.